The following is a 428-amino-acid chain: Serine--tRNA ligase (428 aa).

An L-serine-binding site is contributed by 231 to 233 (TAE). Residue 262-264 (RAE) coordinates ATP. Glu285 is a binding site for L-serine. 349–352 (EISS) lines the ATP pocket. Residue Ser385 coordinates L-serine.

It belongs to the class-II aminoacyl-tRNA synthetase family. Type-1 seryl-tRNA synthetase subfamily. Homodimer. The tRNA molecule binds across the dimer.

It is found in the cytoplasm. The catalysed reaction is tRNA(Ser) + L-serine + ATP = L-seryl-tRNA(Ser) + AMP + diphosphate + H(+). It catalyses the reaction tRNA(Sec) + L-serine + ATP = L-seryl-tRNA(Sec) + AMP + diphosphate + H(+). It functions in the pathway aminoacyl-tRNA biosynthesis; selenocysteinyl-tRNA(Sec) biosynthesis; L-seryl-tRNA(Sec) from L-serine and tRNA(Sec): step 1/1. In terms of biological role, catalyzes the attachment of serine to tRNA(Ser). Is also able to aminoacylate tRNA(Sec) with serine, to form the misacylated tRNA L-seryl-tRNA(Sec), which will be further converted into selenocysteinyl-tRNA(Sec). In Methylorubrum populi (strain ATCC BAA-705 / NCIMB 13946 / BJ001) (Methylobacterium populi), this protein is Serine--tRNA ligase.